The chain runs to 285 residues: Mitochondrial substrate carrier family protein L (285 aa).

Over M1 to N13 the chain is Mitochondrial intermembrane. Solcar repeat units follow at residues K8–K94, I103–Y185, and M193–F282. The helical transmembrane segment at F14–L34 threads the bilayer. At K35 to G69 the chain is on the mitochondrial matrix side. The chain crosses the membrane as a helical span at residues V70–I90. At V91 to P102 the chain is on the mitochondrial intermembrane side. A helical membrane pass occupies residues I103–A123. The Mitochondrial matrix segment spans residues C124 to R156. The chain crosses the membrane as a helical span at residues G157–G177. Residues C178–S198 lie on the Mitochondrial intermembrane side of the membrane. A helical membrane pass occupies residues F199 to I219. The Mitochondrial matrix portion of the chain corresponds to R220–K256. Residues G257–E277 traverse the membrane as a helical segment. Topologically, residues C278–M285 are mitochondrial intermembrane.

The protein belongs to the mitochondrial carrier (TC 2.A.29) family.

The protein resides in the mitochondrion inner membrane. Its function is as follows. Mitochondrial solute carriers shuttle metabolites, nucleotides, and cofactors through the mitochondrial inner membrane. In Dictyostelium discoideum (Social amoeba), this protein is Mitochondrial substrate carrier family protein L (mcfL).